Consider the following 180-residue polypeptide: NAD(P)H-quinone oxidoreductase subunit I, chloroplastic (180 aa).

2 consecutive 4Fe-4S ferredoxin-type domains span residues 55–84 and 95–124; these read GRIHFEFDKCIACEVCVRVCPIDLPLVDWR and LNYSIDFGVCIFCGNCVEYCPTNCLSMTEE. 8 residues coordinate [4Fe-4S] cluster: C64, C67, C70, C74, C104, C107, C110, and C114.

It belongs to the complex I 23 kDa subunit family. In terms of assembly, NDH is composed of at least 16 different subunits, 5 of which are encoded in the nucleus. Requires [4Fe-4S] cluster as cofactor.

It is found in the plastid. It localises to the chloroplast thylakoid membrane. The catalysed reaction is a plastoquinone + NADH + (n+1) H(+)(in) = a plastoquinol + NAD(+) + n H(+)(out). The enzyme catalyses a plastoquinone + NADPH + (n+1) H(+)(in) = a plastoquinol + NADP(+) + n H(+)(out). Functionally, NDH shuttles electrons from NAD(P)H:plastoquinone, via FMN and iron-sulfur (Fe-S) centers, to quinones in the photosynthetic chain and possibly in a chloroplast respiratory chain. The immediate electron acceptor for the enzyme in this species is believed to be plastoquinone. Couples the redox reaction to proton translocation, and thus conserves the redox energy in a proton gradient. This chain is NAD(P)H-quinone oxidoreductase subunit I, chloroplastic, found in Oryza nivara (Indian wild rice).